The primary structure comprises 111 residues: uncharacterized protein (111 aa).

The HIT domain maps to 8–111 (LFLKIIKREE…HVHIIPYYKK (104 aa)). A Histidine triad motif motif is present at residues 100-104 (HTHVH).

This is an uncharacterized protein from Mesomycoplasma hyorhinis (Mycoplasma hyorhinis).